The following is a 270-amino-acid chain: Phospholysine phosphohistidine inorganic pyrophosphate phosphatase (270 aa).

2 residues coordinate Mg(2+): Asp19 and Cys21. Substrate contacts are provided by residues 19–21 (DMC), 56–57 (TN), and Lys191. Asp216 is a Mg(2+) binding site.

The protein belongs to the HAD-like hydrolase superfamily. Requires Mg(2+) as cofactor.

The protein resides in the cytoplasm. It localises to the nucleus. It carries out the reaction diphosphate + H2O = 2 phosphate + H(+). Functionally, phosphatase that hydrolyzes imidodiphosphate, 3-phosphohistidine and 6-phospholysine. Has broad substrate specificity and can also hydrolyze inorganic diphosphate, but with lower efficiency. This is Phospholysine phosphohistidine inorganic pyrophosphate phosphatase (lhpp) from Danio rerio (Zebrafish).